Here is a 369-residue protein sequence, read N- to C-terminus: H-2 class I histocompatibility antigen, K-K alpha chain (369 aa).

The first 21 residues, 1-21 (MAPCMLLLLLAAALAPTQTRA), serve as a signal peptide directing secretion. The interval 22–111 (GPHSLRYFHT…ALRYYNQSAG (90 aa)) is alpha-1. The Extracellular portion of the chain corresponds to 22–305 (GPHSLRYFHT…EPPPSTVSNT (284 aa)). N-linked (GlcNAc...) asparagine glycosylation is present at asparagine 107. Positions 112-203 (GSHTFQRMYG…QLGNATLPRT (92 aa)) are alpha-2. Cysteines 122 and 185 form a disulfide. A glycan (N-linked (GlcNAc...) asparagine) is linked at asparagine 197. Positions 204–295 (DSPKAHVTRH…GLPEPLTLRW (92 aa)) are alpha-3. The 89-residue stretch at 206–294 (PKAHVTRHSR…QGLPEPLTLR (89 aa)) folds into the Ig-like C1-type domain. Cysteine 224 and cysteine 280 are joined by a disulfide. Residues 296–305 (EPPPSTVSNT) are connecting peptide. Residues 306 to 328 (VIIAVLVVLGAAIVTGAVVAFVM) form a helical membrane-spanning segment. Residues 329 to 369 (KMRRRNTGGKGGDYALAPGSQTSDLSLPDCKVMVHDPHSLA) lie on the Cytoplasmic side of the membrane. Phosphoserine occurs at positions 351 and 354.

Belongs to the MHC class I family. In terms of assembly, heterodimer of an alpha chain and a beta chain (beta-2-microglobulin).

The protein localises to the membrane. Its function is as follows. Involved in the presentation of foreign antigens to the immune system. This Mus musculus (Mouse) protein is H-2 class I histocompatibility antigen, K-K alpha chain (H2-K1).